The primary structure comprises 255 residues: F-box/SPRY domain-containing protein 1 (255 aa).

In terms of domain architecture, F-box spans 3 to 51 (DPVAALCNFNVLEVIFSYLDLNDLSRCSQVCRSWHHFLNDENSDVWRWH). One can recognise a B30.2/SPRY domain in the interval 61–253 (MKSDLLTSVS…VSMVYLGTPL (193 aa)).

Belongs to the FBXO45/Fsn family. In terms of assembly, component of an E3 ubiquitin ligase complex composed of hiw and Fsn.

Its subcellular location is the synapse. Its pathway is protein modification; protein ubiquitination. In terms of biological role, required in the presynaptic motoneuron to down-regulate the levels of wnd and restrain synaptic terminal growth at the neuromuscular junction (NMJ). This chain is F-box/SPRY domain-containing protein 1, found in Drosophila willistoni (Fruit fly).